Consider the following 210-residue polypeptide: T-cell surface glycoprotein CD8 beta-2 chain (210 aa).

The N-terminal stretch at 1 to 18 (MRPRLWLLLAAQLTVLHG) is a signal peptide. In terms of domain architecture, Ig-like V-type spans 19-132 (NSVLQQTPAY…ELTFGKGTQL (114 aa)). Residues 19 to 170 (NSVLQQTPAY…ETQKGPLCSP (152 aa)) lie on the Extracellular side of the membrane. The cysteines at positions 41 and 116 are disulfide-linked. N-linked (GlcNAc...) asparagine glycosylation is present at asparagine 102. Residues 171-191 (VTLGLLVAGVLVLLVSLGVAM) form a helical membrane-spanning segment. At 192–210 (HLCCRRRRARLRFMKQFYK) the chain is on the cytoplasmic side.

In terms of assembly, in general heterodimer of an alpha and a beta chain linked by two disulfide bonds.

The protein localises to the cell membrane. Identifies cytotoxic/suppressor T-cells that interact with MHC class I bearing targets. CD8 is thought to play a role in the process of T-cell mediated killing. This Homo sapiens (Human) protein is T-cell surface glycoprotein CD8 beta-2 chain.